A 561-amino-acid polypeptide reads, in one-letter code: MQIQSFYHSASLKTQEAFKSLQKTLYNGMQILSGQGKAPAKAPDARPEIIVLREPGATWGNYLQHQKTSNHSLHNLYNLQRDLLTVAATVLGKQDPVLTSMANQMELAKVKADRPATKQEEAAAKALKKNLIELIAARTQQQNGLPAKEAHRFAAVAFRDAQVKQLNNQPWQTIKNTLTHNGHHYTNTQLPAAEMKIGAKDIFPSAYEGKGVCSWDTKNIHHANNLWMSTVSVHEDGKDKTLFCGIRHGVLSPYHEKDPLLRQAGAENKAKEVLAAALFSKPELLNRALEGEAVSLKLVSVGLLTASNIFGKEGTMVEDQMRAWQSLTQPGKMIHLKIRNKDGDLQTVKIKPDVAAFNVGVNELALKLGFGLKASDSYNAEALHQLLGNDLRPEARPGGWVGEWLAQYPDNYEVVNTLARQIKDIWKNNQHHKDGGEPYKLAQRLAMLAHEIDAVPAWNCKSGKDRTGMMDSEIKRELISFHQTHMLSAPGSLPDSGGQKIFQKVLLNSGNLEIQKQNTGGAGNKVMKNLSPEVLNLSYQKRVGDENIWQSVKGISSLITS.

C460 is an active-site residue. Positions C460 to R466 match the CX5R motif motif.

The protein belongs to the phosphatase IpgD/SopB family.

Its subcellular location is the secreted. Functionally, converts phosphatidylinositol 3,4,5-trisphosphate (PtdIns 3,4,5-P3) to PtdIns 3-P and prevents the transition of PtdIns 3-P to PtdIns 3,5-P2. It is one of the known effectors injected by Salmonella into the host cell and is required for invasion and for an efficient generation and maintenance of Salmonella-containing vacuole (SVC). Alteration of the phosphoinositide composition of the plasma membrane causes membrane ruffling and actin cytoskeleton rearrangements. The persistence of PtdIns 3-P diverts the SCV from the endocytic pathway resulting in enlarged vesicles, which are essential to create a favorable environment where Salmonella can replicate and avoid immune defenses of the host cell. The chain is Inositol phosphate phosphatase SopB (sopB) from Salmonella typhi.